The chain runs to 557 residues: Hepatocyte nuclear factor 1-beta (557 aa).

Residues 1–31 are dimerization; that stretch reads MVSKLTSLQQELLSALLSSGVTKEVLIQALE. An HNF-p1 domain is found at 1 to 32; the sequence is MVSKLTSLQQELLSALLSSGVTKEVLIQALEE. Phosphoserine occurs at positions 49, 52, 75, and 80. Positions 66-85 are disordered; that stretch reads TNGHAKGRLSGDEGSEDGDD. The POU-specific atypical domain maps to 93–188; that stretch reads KELQALNTEE…ILRQFNQTVQ (96 aa). The homeobox; HNF1-type DNA-binding region spans 231 to 311; the sequence is MRRNRFKWGP…NRRKEEAFRQ (81 aa). Residues 324–370 form a disordered region; it reads HNLNPLLTHGSPHHQPSSSPPNKLSGVRYSQPGNNEVTSSSTISHHG. Residues 354–370 show a composition bias toward polar residues; that stretch reads QPGNNEVTSSSTISHHG.

This sequence belongs to the HNF1 homeobox family. In terms of assembly, binds DNA as a dimer. Can form homodimer or heterodimer with HNF1-alpha. Interacts (via HNF-p1 domain) with PCBD1; the interaction increases its transactivation activity. As to expression, liver, kidney and intestine.

The protein localises to the nucleus. Transcription factor that binds to the inverted palindrome 5'-GTTAATNATTAAC-3'. Binds to the FPC element in the cAMP regulatory unit of the PLAU gene. Transcriptional activity is increased by coactivator PCBD1. In Rattus norvegicus (Rat), this protein is Hepatocyte nuclear factor 1-beta (Hnf1b).